Consider the following 309-residue polypeptide: Foldase protein PrsA (309 aa).

Residues 1–20 form the signal peptide; that stretch reads MKKKIVAGAVTLLSVAVLAA. Cysteine 21 is lipidated: N-palmitoyl cysteine. Cysteine 21 carries S-diacylglycerol cysteine lipidation. The region spanning 144-241 is the PpiC domain; that stretch reads TPEVTAQIIK…ASYYIVKLVS (98 aa).

The protein belongs to the PrsA family.

It localises to the cell membrane. It catalyses the reaction [protein]-peptidylproline (omega=180) = [protein]-peptidylproline (omega=0). Functionally, plays a major role in protein secretion by helping the post-translocational extracellular folding of several secreted proteins. This Streptococcus gordonii (strain Challis / ATCC 35105 / BCRC 15272 / CH1 / DL1 / V288) protein is Foldase protein PrsA.